Reading from the N-terminus, the 953-residue chain is Catenin alpha-2 (953 aa).

Thr-632 is subject to Phosphothreonine. Phosphoserine is present on residues Ser-640, Ser-651, and Ser-901. Residues 912–927 show a composition bias toward basic and acidic residues; that stretch reads EKKPLVKREKPEEFQT. The interval 912-939 is disordered; that stretch reads EKKPLVKREKPEEFQTRVRRGSQKKHIS. Basic residues predominate over residues 928–938; it reads RVRRGSQKKHI. Position 939 is a phosphoserine (Ser-939).

The protein belongs to the vinculin/alpha-catenin family. Interacts with CDH1 and CDH2. Interacts with ZNF639; recruits CTNNA2 to the nucleus. Interacts with F-actin. In terms of tissue distribution, expressed almost exclusively in the nervous system.

The protein resides in the cell membrane. It localises to the cytoplasm. Its subcellular location is the cytoskeleton. The protein localises to the cell junction. It is found in the adherens junction. The protein resides in the cell projection. It localises to the axon. Its subcellular location is the nucleus. May function as a linker between cadherin adhesion receptors and the cytoskeleton to regulate cell-cell adhesion and differentiation in the nervous system. Required for proper regulation of cortical neuronal migration and neurite growth. It acts as a negative regulator of Arp2/3 complex activity and Arp2/3-mediated actin polymerization. It thereby suppresses excessive actin branching which would impair neurite growth and stability. Regulates morphological plasticity of synapses and cerebellar and hippocampal lamination during development. Functions in the control of startle modulation. The sequence is that of Catenin alpha-2 (Ctnna2) from Mus musculus (Mouse).